A 1013-amino-acid polypeptide reads, in one-letter code: A-type ATP synthase subunit A (1013 aa).

Residues 392–525 form the DOD-type homing endonuclease domain; it reads FLGYVIGDGT…LTYLLAKLGI (134 aa).

The protein belongs to the ATPase alpha/beta chains family. As to quaternary structure, has multiple subunits with at least A(3), B(3), C, D, E, F, H, I and proteolipid K(x). In terms of processing, this protein undergoes a protein self splicing that involves a post-translational excision of the VDE intervening region (intein) followed by peptide ligation.

It is found in the cell membrane. It carries out the reaction ATP + H2O + 4 H(+)(in) = ADP + phosphate + 5 H(+)(out). In terms of biological role, component of the A-type ATP synthase that produces ATP from ADP in the presence of a proton gradient across the membrane. The A chain is the catalytic subunit. This Pyrococcus furiosus (strain ATCC 43587 / DSM 3638 / JCM 8422 / Vc1) protein is A-type ATP synthase subunit A.